We begin with the raw amino-acid sequence, 131 residues long: MPGTKPVELGSLKVGQYIVIDEVPCRIVDMTKSKPGKHGGAKIRLTAMGLFENVKKEHVGPTSSRADVPLIDKRKGQVLSIMGDLVQIMDLETFDTLEIPMPEDVEEIDSGMEVEYFEAVGRYKITRVISK.

Residue Lys37 is modified to Hypusine.

Belongs to the eIF-5A family.

It localises to the cytoplasm. Functionally, functions by promoting the formation of the first peptide bond. This chain is Translation initiation factor 5A (eIF5A), found in Methanococcus aeolicus (strain ATCC BAA-1280 / DSM 17508 / OCM 812 / Nankai-3).